Here is a 623-residue protein sequence, read N- to C-terminus: Glutathione import ATP-binding protein GsiA (623 aa).

2 ABC transporter domains span residues 18 to 272 and 317 to 567; these read VRNL…QGLL and LQVS…RKLM. Residues 52–59 and 360–367 each bind ATP; these read GESGSGKS and GESGCGKS.

The protein belongs to the ABC transporter superfamily. Glutathione importer (TC 3.A.1.5.11) family. In terms of assembly, the complex is composed of two ATP-binding proteins (GsiA), two transmembrane proteins (GsiC and GsiD) and a solute-binding protein (GsiB).

It is found in the cell inner membrane. The catalysed reaction is glutathione(out) + ATP + H2O = glutathione(in) + ADP + phosphate + H(+). Part of the ABC transporter complex GsiABCD involved in glutathione import. Responsible for energy coupling to the transport system. This chain is Glutathione import ATP-binding protein GsiA, found in Pectobacterium atrosepticum (strain SCRI 1043 / ATCC BAA-672) (Erwinia carotovora subsp. atroseptica).